Here is a 218-residue protein sequence, read N- to C-terminus: Protein N-lysine methyltransferase METTL21A (218 aa).

S-adenosyl-L-methionine-binding positions include W47, G73–G75, D94, W125, and A143.

It belongs to the methyltransferase superfamily. METTL21 family. In terms of assembly, interacts with heat shock protein 70 family members; at least some of these proteins are methylation substrates.

The protein localises to the cytoplasm. It carries out the reaction L-lysyl-[protein] + 3 S-adenosyl-L-methionine = N(6),N(6),N(6)-trimethyl-L-lysyl-[protein] + 3 S-adenosyl-L-homocysteine + 3 H(+). Its function is as follows. Protein-lysine methyltransferase that selectively trimethylates residues in heat shock protein 70 (HSP70) family members. Contributes to the in vivo trimethylation of Lys residues in HSPA1 and HSPA8. In vitro methylates 'Lys-561' in HSPA1, 'Lys-564' in HSPA2, 'Lys-585' in HSPA5, 'Lys-563' in HSPA6 and 'Lys-561' in HSPA8. The chain is Protein N-lysine methyltransferase METTL21A (METTL21A) from Homo sapiens (Human).